A 725-amino-acid polypeptide reads, in one-letter code: Fatty acid oxidation complex subunit alpha (725 aa).

The tract at residues 1-189 (MIYQGENLSV…ALGMIDGVVS (189 aa)) is enoyl-CoA hydratase/isomerase. Asp296 is a binding site for substrate. A 3-hydroxyacyl-CoA dehydrogenase region spans residues 311–725 (EPVTSAAVLG…APQSLSAPSA (415 aa)). NAD(+) contacts are provided by residues Met324, Asp343, 400–402 (VVE), Lys407, and Ser429. The For 3-hydroxyacyl-CoA dehydrogenase activity role is filled by His450. Asn453 contributes to the NAD(+) binding site. Substrate-binding residues include Asn500 and Tyr660.

The protein in the N-terminal section; belongs to the enoyl-CoA hydratase/isomerase family. It in the C-terminal section; belongs to the 3-hydroxyacyl-CoA dehydrogenase family. Heterotetramer of two alpha chains (FadB) and two beta chains (FadA).

The catalysed reaction is a (3S)-3-hydroxyacyl-CoA + NAD(+) = a 3-oxoacyl-CoA + NADH + H(+). It catalyses the reaction a (3S)-3-hydroxyacyl-CoA = a (2E)-enoyl-CoA + H2O. It carries out the reaction a 4-saturated-(3S)-3-hydroxyacyl-CoA = a (3E)-enoyl-CoA + H2O. The enzyme catalyses (3S)-3-hydroxybutanoyl-CoA = (3R)-3-hydroxybutanoyl-CoA. The catalysed reaction is a (3Z)-enoyl-CoA = a 4-saturated (2E)-enoyl-CoA. It catalyses the reaction a (3E)-enoyl-CoA = a 4-saturated (2E)-enoyl-CoA. Its pathway is lipid metabolism; fatty acid beta-oxidation. In terms of biological role, involved in the aerobic and anaerobic degradation of long-chain fatty acids via beta-oxidation cycle. Catalyzes the formation of 3-oxoacyl-CoA from enoyl-CoA via L-3-hydroxyacyl-CoA. It can also use D-3-hydroxyacyl-CoA and cis-3-enoyl-CoA as substrate. The chain is Fatty acid oxidation complex subunit alpha from Aliivibrio fischeri (strain MJ11) (Vibrio fischeri).